A 29-amino-acid polypeptide reads, in one-letter code: Cytolysin Oshem 1 (29 aa).

It is found in the secreted. It localises to the nematocyst. Its subcellular location is the target cell membrane. In terms of biological role, cytolysin that shows moderate hemolysis and moderate myonecrosis. This is Cytolysin Oshem 1 from Olindias sambaquiensis (Hydromedusa).